We begin with the raw amino-acid sequence, 208 residues long: MSKVLFVKANDRPAEQAVSSKMYETFVNTYKEANPNTEITELDLFALDLPYYGNIAISGGYKRSQGMELTAEEEKAVATVDQYLNQFLEADKVVFAFPLWNFTVPAPLITYISYLSQAGKTFKYTANGPEGLAGGKKVVVLGARGSDYSSEQMAPMEMAVNYVTTVLGFWGITNPETVVIEGHNQYPDRSQQIVEEGLENVKKVAAKF.

The protein belongs to the azoreductase type 1 family. As to quaternary structure, homodimer. The cofactor is FMN.

It carries out the reaction 2 a quinone + NADH + H(+) = 2 a 1,4-benzosemiquinone + NAD(+). It catalyses the reaction N,N-dimethyl-1,4-phenylenediamine + anthranilate + 2 NAD(+) = 2-(4-dimethylaminophenyl)diazenylbenzoate + 2 NADH + 2 H(+). Its function is as follows. Quinone reductase that provides resistance to thiol-specific stress caused by electrophilic quinones. Also exhibits azoreductase activity. Catalyzes the reductive cleavage of the azo bond in aromatic azo compounds to the corresponding amines. The sequence is that of FMN-dependent NADH:quinone oxidoreductase 1 from Bacillus thuringiensis subsp. konkukian (strain 97-27).